The primary structure comprises 107 residues: uncharacterized protein (107 aa).

Polar residues predominate over residues 1–14 (MTERNASGRMNTKG). Residues 1–20 (MTERNASGRMNTKGRSIKET) form a disordered region.

The protein resides in the mitochondrion. This is an uncharacterized protein from Arabidopsis thaliana (Mouse-ear cress).